The following is a 291-amino-acid chain: Small ribosomal subunit protein uS2 (291 aa).

This sequence belongs to the universal ribosomal protein uS2 family.

This is Small ribosomal subunit protein uS2 from Lawsonia intracellularis (strain PHE/MN1-00).